Reading from the N-terminus, the 25-residue chain is Neuromedin-U-25 (25 aa).

Position 25 is an asparagine amide (N25).

This sequence belongs to the NmU family.

It is found in the secreted. In terms of biological role, stimulates uterine smooth muscle contraction and causes selective vasoconstriction. This chain is Neuromedin-U-25, found in Rana temporaria (European common frog).